The following is a 337-amino-acid chain: Glyceraldehyde-3-phosphate dehydrogenase (337 aa).

Residues 12 to 13 (RI), D34, and R79 contribute to the NAD(+) site. D-glyceraldehyde 3-phosphate-binding positions include 150–152 (SCT), T181, 210–211 (TG), and R233. C151 acts as the Nucleophile in catalysis. N315 is a binding site for NAD(+).

This sequence belongs to the glyceraldehyde-3-phosphate dehydrogenase family. Homotetramer.

It localises to the cytoplasm. It carries out the reaction D-glyceraldehyde 3-phosphate + phosphate + NAD(+) = (2R)-3-phospho-glyceroyl phosphate + NADH + H(+). Its pathway is carbohydrate degradation; glycolysis; pyruvate from D-glyceraldehyde 3-phosphate: step 1/5. This is Glyceraldehyde-3-phosphate dehydrogenase (GPD-1) from Claviceps purpurea (strain 20.1) (Ergot fungus).